The primary structure comprises 483 residues: UDP-N-acetylmuramoyl-L-alanyl-D-glutamate--2,6-diaminopimelate ligase (483 aa).

Serine 30 serves as a coordination point for UDP-N-acetyl-alpha-D-muramoyl-L-alanyl-D-glutamate. 109–115 contributes to the ATP binding site; sequence GTNGKTT. UDP-N-acetyl-alpha-D-muramoyl-L-alanyl-D-glutamate-binding positions include 151 to 152, serine 178, and arginine 186; that span reads TT. At lysine 218 the chain carries N6-carboxylysine. Meso-2,6-diaminopimelate is bound by residues arginine 380, 403 to 406, glycine 453, and glutamate 457; that span reads DNPR. The short motif at 403–406 is the Meso-diaminopimelate recognition motif element; the sequence is DNPR.

The protein belongs to the MurCDEF family. MurE subfamily. Mg(2+) serves as cofactor. In terms of processing, carboxylation is probably crucial for Mg(2+) binding and, consequently, for the gamma-phosphate positioning of ATP.

The protein resides in the cytoplasm. It carries out the reaction UDP-N-acetyl-alpha-D-muramoyl-L-alanyl-D-glutamate + meso-2,6-diaminopimelate + ATP = UDP-N-acetyl-alpha-D-muramoyl-L-alanyl-gamma-D-glutamyl-meso-2,6-diaminopimelate + ADP + phosphate + H(+). It participates in cell wall biogenesis; peptidoglycan biosynthesis. Its function is as follows. Catalyzes the addition of meso-diaminopimelic acid to the nucleotide precursor UDP-N-acetylmuramoyl-L-alanyl-D-glutamate (UMAG) in the biosynthesis of bacterial cell-wall peptidoglycan. The protein is UDP-N-acetylmuramoyl-L-alanyl-D-glutamate--2,6-diaminopimelate ligase of Chlamydia caviae (strain ATCC VR-813 / DSM 19441 / 03DC25 / GPIC) (Chlamydophila caviae).